A 216-amino-acid polypeptide reads, in one-letter code: Superoxide dismutase [Mn], mitochondrial (216 aa).

The N-terminal 18 residues, 1–18, are a transit peptide targeting the mitochondrion; that stretch reads MSFLNRNLSRTIKAAVRG. The Mn(2+) site is built by H44, H92, D176, and H180.

It belongs to the iron/manganese superoxide dismutase family. Mn(2+) serves as cofactor.

Its subcellular location is the mitochondrion matrix. It carries out the reaction 2 superoxide + 2 H(+) = H2O2 + O2. Its function is as follows. Destroys superoxide anion radicals which are normally produced within the cells and which are toxic to biological systems. The sequence is that of Superoxide dismutase [Mn], mitochondrial (Sod2) from Glossina morsitans morsitans (Savannah tsetse fly).